A 515-amino-acid polypeptide reads, in one-letter code: Putative acetolactate synthase large subunit IlvX (515 aa).

Glu-48 contributes to the thiamine diphosphate binding site. FAD contacts are provided by residues 249–269 (FAEG…AGAR) and 283–302 (DLVP…GAAD). The segment at 357-436 (TCGVLLPQAT…VTTVIYNNGA (80 aa)) is thiamine pyrophosphate binding. Asp-407 and Asn-434 together coordinate Mg(2+).

It belongs to the TPP enzyme family. In terms of assembly, heterodimer of large catalytic subunit and small regulatory subunit. It depends on Mg(2+) as a cofactor. The cofactor is thiamine diphosphate.

The enzyme catalyses 2 pyruvate + H(+) = (2S)-2-acetolactate + CO2. The protein operates within amino-acid biosynthesis; L-isoleucine biosynthesis; L-isoleucine from 2-oxobutanoate: step 1/4. It functions in the pathway amino-acid biosynthesis; L-valine biosynthesis; L-valine from pyruvate: step 1/4. Its function is as follows. Catalyzes the conversion of 2 pyruvate molecules into acetolactate in the first common step of the biosynthetic pathway of the branched-amino acids such as leucine, isoleucine, and valine. This Mycobacterium tuberculosis (strain ATCC 25618 / H37Rv) protein is Putative acetolactate synthase large subunit IlvX (ilvX).